A 518-amino-acid polypeptide reads, in one-letter code: Subtilisin-like protease 1 (518 aa).

The signal sequence occupies residues 1 to 19; that stretch reads MGVFRFISISLAAVSAANA. Positions 20–116 are excised as a propeptide; that stretch reads AQILSMPHAQ…VEPDTIISVH (97 aa). One can recognise an Inhibitor I9 domain in the interval 34-115; that stretch reads SYIVMMKDDT…FVEPDTIISV (82 aa). The Peptidase S8 domain occupies 126-400; that stretch reads SWGLARISNP…NVLINNGGAK (275 aa). Catalysis depends on charge relay system residues Asp-158 and His-190. Residues 175–198 form a disordered region; that stretch reads GSNQVNDGDDRDGSGHGTHTSGTM. Residues Asn-233 and Asn-251 are each glycosylated (N-linked (GlcNAc...) asparagine). Over residues 282–294 the composition is skewed to polar residues; the sequence is NDNQDAQSSSPAS. Positions 282–312 are disordered; it reads NDNQDAQSSSPASEPSVCTVGSSAEDDSRSS. Ser-345 serves as the catalytic Charge relay system. Residues 378 to 394 are compositionally biased toward polar residues; it reads TSSITDAGPGTPTNVLI. Positions 378-496 are disordered; sequence TSSITDAGPG…PYPGGDNFDF (119 aa). 2 stretches are compositionally biased toward pro residues: residues 405-470 and 478-487; these read NPNP…PGEP and APAPQHPHTP.

The protein belongs to the peptidase S8 family.

Its subcellular location is the secreted. In terms of biological role, secreted subtilisin-like serine protease with keratinolytic activity that contributes to pathogenicity. In Trichophyton verrucosum (strain HKI 0517), this protein is Subtilisin-like protease 1 (SUB1).